We begin with the raw amino-acid sequence, 432 residues long: Histidine--tRNA ligase (432 aa).

It belongs to the class-II aminoacyl-tRNA synthetase family.

It is found in the cytoplasm. It catalyses the reaction tRNA(His) + L-histidine + ATP = L-histidyl-tRNA(His) + AMP + diphosphate + H(+). This Pyrococcus furiosus (strain ATCC 43587 / DSM 3638 / JCM 8422 / Vc1) protein is Histidine--tRNA ligase.